Reading from the N-terminus, the 495-residue chain is Probable cobyric acid synthase (495 aa).

The 186-residue stretch at 256–441 folds into the GATase cobBQ-type domain; sequence DVDIAVIRLT…LHGLFDNVNI (186 aa). Residue C334 is the Nucleophile of the active site. The active site involves H433.

Belongs to the CobB/CobQ family. CobQ subfamily.

It functions in the pathway cofactor biosynthesis; adenosylcobalamin biosynthesis. In terms of biological role, catalyzes amidations at positions B, D, E, and G on adenosylcobyrinic A,C-diamide. NH(2) groups are provided by glutamine, and one molecule of ATP is hydrogenolyzed for each amidation. This is Probable cobyric acid synthase from Methanococcoides burtonii (strain DSM 6242 / NBRC 107633 / OCM 468 / ACE-M).